The primary structure comprises 493 residues: 3-octaprenyl-4-hydroxybenzoate carboxy-lyase (493 aa).

A Mn(2+)-binding site is contributed by Asn172. Residues 175–177, 189–191, and 194–195 contribute to the prenylated FMN site; these read IYR, RWL, and RG. Position 238 (Glu238) interacts with Mn(2+). Asp287 acts as the Proton donor in catalysis.

Belongs to the UbiD family. As to quaternary structure, homohexamer. Prenylated FMN is required as a cofactor. Mn(2+) serves as cofactor.

It is found in the cell membrane. The catalysed reaction is a 4-hydroxy-3-(all-trans-polyprenyl)benzoate + H(+) = a 2-(all-trans-polyprenyl)phenol + CO2. It functions in the pathway cofactor biosynthesis; ubiquinone biosynthesis. Its function is as follows. Catalyzes the decarboxylation of 3-octaprenyl-4-hydroxy benzoate to 2-octaprenylphenol, an intermediate step in ubiquinone biosynthesis. This is 3-octaprenyl-4-hydroxybenzoate carboxy-lyase from Shewanella piezotolerans (strain WP3 / JCM 13877).